The primary structure comprises 274 residues: DNA-directed RNA polymerase subunit Rpo3 (274 aa).

The [3Fe-4S] cluster site is built by Cys-202, Cys-205, and Cys-208.

This sequence belongs to the archaeal Rpo3/eukaryotic RPB3 RNA polymerase subunit family. Part of the RNA polymerase complex. [3Fe-4S] cluster serves as cofactor.

It is found in the cytoplasm. The catalysed reaction is RNA(n) + a ribonucleoside 5'-triphosphate = RNA(n+1) + diphosphate. Functionally, DNA-dependent RNA polymerase (RNAP) catalyzes the transcription of DNA into RNA using the four ribonucleoside triphosphates as substrates. This Methanobrevibacter smithii (strain ATCC 35061 / DSM 861 / OCM 144 / PS) protein is DNA-directed RNA polymerase subunit Rpo3.